The following is a 433-amino-acid chain: B3 domain-containing protein Os04g0676600 (433 aa).

Disordered stretches follow at residues 1 to 29 (MADT…GGGQ) and 216 to 283 (FPPV…NSAN). Over residues 13–24 (GDDRGREGHDDF) the composition is skewed to basic and acidic residues. The span at 216–229 (FPPVSSSSRSFSSA) shows a compositional bias: low complexity. The span at 237–265 (DAKKAKKSDIKDQPIVLRRSDTESEKNDE) shows a compositional bias: basic and acidic residues. The span at 269-283 (TPASEPSSMSHNSAN) shows a compositional bias: polar residues. Residues 297-399 (LRKELTNSDV…KLVVRGEKAI (103 aa)) constitute a DNA-binding region (TF-B3).

The protein resides in the nucleus. Functionally, probable transcription regulator that binds specifically to the DNA sequence 5'-CATGC-3' of the IDE1 element found in the promoter of the barley iron deficiency-inducible gene IDS2. This chain is B3 domain-containing protein Os04g0676600, found in Oryza sativa subsp. japonica (Rice).